Consider the following 548-residue polypeptide: Luciferin 4-monooxygenase (548 aa).

The short motif at alanine 546–methionine 548 is the Microbody targeting signal element.

The protein belongs to the ATP-dependent AMP-binding enzyme family. Homodimer. It depends on Mg(2+) as a cofactor.

It is found in the peroxisome. It carries out the reaction firefly D-luciferin + ATP + O2 = firefly oxyluciferin + hnu + AMP + CO2 + diphosphate. Its activity is regulated as follows. Inhibited by ATP analogs and sodium deoxycholate. Activated by choline-containing phospholipids. Functionally, produces green light with a wavelength of 570 nm. This is Luciferin 4-monooxygenase from Luciola mingrelica (Southern Russian firefly).